A 261-amino-acid polypeptide reads, in one-letter code: Carbonic anhydrase 1 (261 aa).

Alanine 2 carries the post-translational modification N-acetylalanine. One can recognise an Alpha-carbonic anhydrase domain in the interval 4 to 261; it reads PDWGYDDKNG…LKGRTVRASF (258 aa). The active-site Proton donor/acceptor is histidine 65. Residues histidine 95, histidine 97, and histidine 120 each contribute to the Zn(2+) site. Substrate contacts are provided by residues threonine 200 and 200-201; that span reads TH. The interval 235–261 is disordered; it reads EGDNPVPSQRNNRPTQPLKGRTVRASF. The span at 240–249 shows a compositional bias: polar residues; it reads VPSQRNNRPT.

It belongs to the alpha-carbonic anhydrase family. Requires Zn(2+) as cofactor.

Its subcellular location is the cytoplasm. It carries out the reaction hydrogencarbonate + H(+) = CO2 + H2O. It catalyses the reaction urea = cyanamide + H2O. Inhibited by acetazolamide. Functionally, catalyzes the reversible hydration of carbon dioxide. Can hydrate cyanamide to urea. This is Carbonic anhydrase 1 (CA1) from Macaca nemestrina (Pig-tailed macaque).